We begin with the raw amino-acid sequence, 1368 residues long: Kinesin-like protein KIF24 (1368 aa).

One can recognise an SAM domain in the interval 1–64 (MASWLYECLC…FQLIKIIKIM (64 aa)). The disordered stretch occupies residues 89 to 112 (ELRSGPRRQLNFDSPADNKDRNAS). Phosphoserine occurs at positions 102 and 112. Residues 223–546 (KIRVCVRKRP…LRYADRVKEL (324 aa)) enclose the Kinesin motor domain. 313–320 (GQTGAGKT) lines the ATP pocket. Ser-478 carries the phosphoserine modification. The segment at 478-709 (SLLALKECIR…STKCKKVQTV (232 aa)) is interaction with MPHOSPH9. Over residues 557 to 576 (TSRNRTSGNSSPKRIQSSPG) the composition is skewed to polar residues. 2 disordered regions span residues 557–584 (TSRNRTSGNSSPKRIQSSPGALSEDKCS) and 602–639 (GSTRGKVHPLTSHPPNIPFTSAPKVSGKRGGSRGSPSQ). At Ser-584 the chain carries Phosphoserine. Thr-621 is modified (phosphothreonine; by NEK2). Ser-622 is subject to Phosphoserine; by NEK2. Ser-646 is subject to Phosphoserine. Disordered regions lie at residues 651–670 (TVRSGHVAKKKPEESAPLCS), 729–753 (HRAEYSQDSQRGTPARPASEAWTNI), 792–849 (QYRP…NTLE), 864–938 (GPEK…LAEK), and 952–984 (RGGGSSFDLRKDASQSEVSGENEGNLPSPEEDG). Acidic residues predominate over residues 819–830 (QVEELDDSDFSE). A phosphoserine mark is found at Ser-826 and Ser-829. 2 stretches are compositionally biased toward polar residues: residues 839-849 (QRATKQRNTLE) and 871-881 (ERQQSLFSSPR). Residues 882–906 (TGDKKDLTKSWVDSRDPINHRRAAL) are compositionally biased toward basic and acidic residues. Ser-1012 carries the phosphoserine modification. 2 disordered regions span residues 1054-1073 (MSLLENPDNEGSPPSEQLVQ) and 1086-1148 (GGPV…SREA). Polar residues predominate over residues 1106–1119 (SSATRHLWLSSSPP). Basic and acidic residues predominate over residues 1138–1148 (HPADKLPSREA).

The protein belongs to the TRAFAC class myosin-kinesin ATPase superfamily. Kinesin family. In terms of assembly, interacts with CCP110, CEP97, TALPID3. Interacts with MPHOSPH9.

The protein resides in the cytoplasm. It is found in the cytoskeleton. The protein localises to the microtubule organizing center. Its subcellular location is the centrosome. It localises to the centriole. In terms of biological role, microtubule-dependent motor protein that acts as a negative regulator of ciliogenesis by mediating recruitment of CCP110 to mother centriole in cycling cells, leading to restrict nucleation of cilia at centrioles. Mediates depolymerization of microtubules of centriolar origin, possibly to suppress aberrant cilia formation. Following activation by NEK2 involved in disassembly of primary cilium during G2/M phase but does not disassemble fully formed ciliary axonemes. As cilium assembly and disassembly is proposed to coexist in a dynamic equilibrium may suppress nascent cilium assembly and, potentially, ciliar re-assembly in cells that have already disassembled their cilia ensuring the completion of cilium removal in the later stages of the cell cycle. Plays an important role in recruiting MPHOSPH9, a negative regulator of cilia formation to the distal end of mother centriole. This chain is Kinesin-like protein KIF24 (KIF24), found in Homo sapiens (Human).